The following is a 1368-amino-acid chain: MAP3K epsilon protein kinase 1 (1368 aa).

Residues 20–274 (YMLGDEIGKG…AKTLLSHPWI (255 aa)) enclose the Protein kinase domain. HEAT repeat units follow at residues 25-62 (EIGK…EDLN) and 86-125 (SKTK…AVYI). Residues 26 to 34 (IGKGAYGRV) and Lys-49 contribute to the ATP site. Asp-144 serves as the catalytic Proton acceptor. An HEAT 3 repeat occupies 218–256 (PYYDLQPMPALFRIVQDDNPPIPDSLSPDITDFLRQCFK). Disordered stretches follow at residues 296–415 (EATA…KNTS) and 430–507 (QTSH…PVAD). The span at 351–364 (LGEEGTDNSEDDIM) shows a compositional bias: acidic residues. 2 stretches are compositionally biased toward basic and acidic residues: residues 388–399 (SDFHGKSERGET) and 470–486 (SLHD…EGKP). The span at 488-502 (EASTSMPTSNVNQGD) shows a compositional bias: polar residues. 5 HEAT repeats span residues 533-571 (SNDG…LFPL), 628-653 (IPKS…DFQE), 654-695 (NACL…SSPL), 699-737 (MFIA…VFKL), and 750-788 (AAKN…RVRS). Residues 777 to 883 (GGLDGQAPRV…ISLSANRTST (107 aa)) form a disordered region. Polar residues predominate over residues 791 to 808 (LDPNNPIFGQNETSSLSM). Composition is skewed to basic and acidic residues over residues 813–826 (DVLK…EEPS) and 836–852 (SDVH…DKPR). HEAT repeat units lie at residues 903–940 (EQVR…HESR), 1025–1063 (ATSS…ADTT), 1067–1105 (YMCS…DPNC), 1112–1150 (ADAI…INKR), 1154–1191 (QAAE…ASRN), 1196–1234 (LRAH…DNRK), 1258–1281 (RHFV…NKTL), 1282–1318 (AVNG…HHPR), and 1348–1368 (QVLV…NTIL).

This sequence belongs to the protein kinase superfamily. Ser/Thr protein kinase family. Interacts with SGP1. In terms of processing, autophosphorylated. Expressed in both the sporophytic and the gametophytic tissues, especially in dividing cells. Mostly present in flower buds and mature flowers. Also accumulates in embryos, in roots apices, trichomes and ovule integuments.

The protein localises to the cytoplasm. Its subcellular location is the cytoskeleton. It is found in the microtubule organizing center. It localises to the nucleus. The protein resides in the nucleolus. The protein localises to the cell membrane. The enzyme catalyses L-seryl-[protein] + ATP = O-phospho-L-seryl-[protein] + ADP + H(+). It carries out the reaction L-threonyl-[protein] + ATP = O-phospho-L-threonyl-[protein] + ADP + H(+). In terms of biological role, serine/threonine-protein kinase involved in the spatial and temporal control system organizing cortical activities in mitotic and postmitotic cells. Required for the normal functioning of the plasma membrane in developing pollen. Involved in the regulation of cell expansion, cell elongation, and embryo development. The protein is MAP3K epsilon protein kinase 1 of Arabidopsis thaliana (Mouse-ear cress).